A 67-amino-acid polypeptide reads, in one-letter code: Large ribosomal subunit protein bL35 (67 aa).

The interval 21–50 (KVMCGPGNKRHGLINRPQKMKRTNRGPQTM) is disordered. Basic residues predominate over residues 28–44 (NKRHGLINRPQKMKRTN).

This sequence belongs to the bacterial ribosomal protein bL35 family.

The sequence is that of Large ribosomal subunit protein bL35 from Gluconobacter oxydans (strain 621H) (Gluconobacter suboxydans).